Here is a 169-residue protein sequence, read N- to C-terminus: MSKPICSTGLRWLWLVVVVLVLDFASKQWILGNFVLGQSQPLIPSFNLFYARNYGAAFSFLADHGGWQRWFFAGIAVAIVAVLLVMMYRSSAQQKLNNIAYAFIIGGALGNLFDRLWHGFVVDFIDFYVGNWHYPTFNLADSFICVGAAMIVLEGFLSPANKSAKSKGE.

3 helical membrane passes run 12 to 32 (WLWLVVVVLVLDFASKQWILG), 70 to 90 (WFFAGIAVAIVAVLLVMMYRS), and 102 to 122 (AFIIGGALGNLFDRLWHGFVV). Catalysis depends on residues Asp123 and Asp141. A helical membrane pass occupies residues 137–157 (FNLADSFICVGAAMIVLEGFL).

The protein belongs to the peptidase A8 family.

It is found in the cell inner membrane. It carries out the reaction Release of signal peptides from bacterial membrane prolipoproteins. Hydrolyzes -Xaa-Yaa-Zaa-|-(S,diacylglyceryl)Cys-, in which Xaa is hydrophobic (preferably Leu), and Yaa (Ala or Ser) and Zaa (Gly or Ala) have small, neutral side chains.. Its pathway is protein modification; lipoprotein biosynthesis (signal peptide cleavage). Functionally, this protein specifically catalyzes the removal of signal peptides from prolipoproteins. The protein is Lipoprotein signal peptidase of Serratia proteamaculans (strain 568).